The sequence spans 503 residues: Na(+)-translocating NADH-quinone reductase subunit B (503 aa).

The next 5 membrane-spanning stretches (helical) occupy residues 55–75 (MMLV…NSGV), 94–114 (ISGF…FSIL), 120–140 (IFLP…VLFA), 161–181 (TLPP…GVVV), and 186–206 (FGGT…FLFF). Position 248 is an FMN phosphoryl threonine (Thr-248). A run of 5 helical transmembrane segments spans residues 361 to 381 (TSTF…IASW), 387 to 407 (FGIG…LIVG), 417 to 437 (FFIP…LVFM), 452 to 472 (WIYG…NPAY), and 475 to 495 (GVML…YFAV).

The protein belongs to the NqrB/RnfD family. As to quaternary structure, composed of six subunits; NqrA, NqrB, NqrC, NqrD, NqrE and NqrF. FMN is required as a cofactor.

Its subcellular location is the cell inner membrane. It catalyses the reaction a ubiquinone + n Na(+)(in) + NADH + H(+) = a ubiquinol + n Na(+)(out) + NAD(+). Functionally, NQR complex catalyzes the reduction of ubiquinone-1 to ubiquinol by two successive reactions, coupled with the transport of Na(+) ions from the cytoplasm to the periplasm. NqrA to NqrE are probably involved in the second step, the conversion of ubisemiquinone to ubiquinol. The polypeptide is Na(+)-translocating NADH-quinone reductase subunit B (Chlamydia caviae (strain ATCC VR-813 / DSM 19441 / 03DC25 / GPIC) (Chlamydophila caviae)).